Consider the following 430-residue polypeptide: Ribosomal protein uS12 methylthiotransferase RimO (430 aa).

The region spanning 1–116 is the MTTase N-terminal domain; that stretch reads MRVGIKVLGC…IANAIENGTD (116 aa). [4Fe-4S] cluster is bound by residues C10, C46, C79, C148, C152, and C155. One can recognise a Radical SAM core domain in the interval 134 to 365; the sequence is LEERPYAYVK…LLQAEISNSR (232 aa). The TRAM domain maps to 367–430; sequence DRFVGKKLKF…DEYDMWGSVI (64 aa).

This sequence belongs to the methylthiotransferase family. RimO subfamily. In terms of assembly, monomer. [4Fe-4S] cluster is required as a cofactor.

The protein resides in the cytoplasm. The enzyme catalyses L-aspartate(89)-[ribosomal protein uS12]-hydrogen + (sulfur carrier)-SH + AH2 + 2 S-adenosyl-L-methionine = 3-methylsulfanyl-L-aspartate(89)-[ribosomal protein uS12]-hydrogen + (sulfur carrier)-H + 5'-deoxyadenosine + L-methionine + A + S-adenosyl-L-homocysteine + 2 H(+). In terms of biological role, catalyzes the methylthiolation of an aspartic acid residue of ribosomal protein uS12. The sequence is that of Ribosomal protein uS12 methylthiotransferase RimO from Thermotoga maritima (strain ATCC 43589 / DSM 3109 / JCM 10099 / NBRC 100826 / MSB8).